The following is a 583-amino-acid chain: L-galactono-1,4-lactone dehydrogenase 1, mitochondrial (583 aa).

A mitochondrion-targeting transit peptide spans 1 to 36; that stretch reads MRRLLLAGILRRASSSPSSHHHLHLVRALSASSPLP. Positions 37 to 78 are cleaved as a propeptide — removed in mature form; sequence ASDADLRKYAGYALLLLGCGAATYYSFPLPPDALHKKAVPFK. Residues 45–61 form a helical membrane-spanning segment; sequence YAGYALLLLGCGAATYY. One can recognise an FAD-binding PCMH-type domain in the interval 95–266; sequence THEVHTRVLL…AEVTLQCVER (172 aa).

FAD is required as a cofactor.

It localises to the mitochondrion membrane. It catalyses the reaction L-galactono-1,4-lactone + 4 Fe(III)-[cytochrome c] = L-dehydroascorbate + 4 Fe(II)-[cytochrome c] + 5 H(+). The protein operates within cofactor biosynthesis; L-ascorbate biosynthesis. Its function is as follows. Involved in the biosynthesis of ascorbic acid. This Oryza sativa subsp. japonica (Rice) protein is L-galactono-1,4-lactone dehydrogenase 1, mitochondrial (GLDH1).